Reading from the N-terminus, the 514-residue chain is ATP synthase subunit alpha (514 aa).

170–177 (GDRQIGKT) contacts ATP.

Belongs to the ATPase alpha/beta chains family. In terms of assembly, F-type ATPases have 2 components, CF(1) - the catalytic core - and CF(0) - the membrane proton channel. CF(1) has five subunits: alpha(3), beta(3), gamma(1), delta(1), epsilon(1). CF(0) has three main subunits: a(1), b(2) and c(9-12). The alpha and beta chains form an alternating ring which encloses part of the gamma chain. CF(1) is attached to CF(0) by a central stalk formed by the gamma and epsilon chains, while a peripheral stalk is formed by the delta and b chains.

The protein resides in the cell inner membrane. The enzyme catalyses ATP + H2O + 4 H(+)(in) = ADP + phosphate + 5 H(+)(out). In terms of biological role, produces ATP from ADP in the presence of a proton gradient across the membrane. The alpha chain is a regulatory subunit. The polypeptide is ATP synthase subunit alpha (Pseudomonas putida (strain GB-1)).